The primary structure comprises 49 residues: Large ribosomal subunit protein bL33B (49 aa).

It belongs to the bacterial ribosomal protein bL33 family.

The polypeptide is Large ribosomal subunit protein bL33B (Bacillus anthracis).